We begin with the raw amino-acid sequence, 669 residues long: Threonine--tRNA ligase (669 aa).

Residues 3–60 enclose the TGS domain; that stretch reads DAQQITLIVDGEETKVTEGTTGAELFFERRDVVVARVNGVLKDLDQVLTEGADVEGVT. Positions 260–566 are catalytic; it reads DHRKLGVELD…LTEHYAGAFP (307 aa). Cys365, His416, and His543 together coordinate Zn(2+).

The protein belongs to the class-II aminoacyl-tRNA synthetase family. In terms of assembly, homodimer. Zn(2+) serves as cofactor.

The protein resides in the cytoplasm. The enzyme catalyses tRNA(Thr) + L-threonine + ATP = L-threonyl-tRNA(Thr) + AMP + diphosphate + H(+). Its function is as follows. Catalyzes the attachment of threonine to tRNA(Thr) in a two-step reaction: L-threonine is first activated by ATP to form Thr-AMP and then transferred to the acceptor end of tRNA(Thr). Also edits incorrectly charged L-seryl-tRNA(Thr). This is Threonine--tRNA ligase from Paenarthrobacter aurescens (strain TC1).